The following is a 261-amino-acid chain: L-erythrulose-1-phosphate isomerase (261 aa).

Catalysis depends on H99, which acts as the Electrophile. E172 serves as the catalytic Proton acceptor.

The protein belongs to the triosephosphate isomerase family.

It carries out the reaction L-erythrulose 1-phosphate = D-erythrulose 4-phosphate. It functions in the pathway carbohydrate metabolism. In terms of biological role, involved in catabolism of D-apiose. Catalyzes the isomerization of L-erythrulose 1-phosphate to D-erythrulose 4-phosphate. The polypeptide is L-erythrulose-1-phosphate isomerase (Rhizobium rhizogenes (strain K84 / ATCC BAA-868) (Agrobacterium radiobacter)).